Consider the following 63-residue polypeptide: Large ribosomal subunit protein bL35 (63 aa).

The protein belongs to the bacterial ribosomal protein bL35 family.

The protein is Large ribosomal subunit protein bL35 of Thermobifida fusca (strain YX).